The primary structure comprises 267 residues: Low affinity immunoglobulin gamma Fc region receptor III (267 aa).

Positions 1–36 (MTLETQMFQNAHSGSQWLLPPLTMLLLFAFADRQTA) are cleaved as a signal peptide. Residues 37–221 (NLPKAVVKRD…STSSLVWFHA (185 aa)) lie on the Extracellular side of the membrane. 2 Ig-like C2-type domains span residues 39 to 121 (PKAV…EVIS) and 122 to 204 (DWLL…VTIT). 2 disulfide bridges follow: C62–C104 and C143–C187. N-linked (GlcNAc...) asparagine glycosylation is found at N70, N78, N97, N171, and N178. The chain crosses the membrane as a helical span at residues 222 to 241 (AFCLVMCLLFAVDTGLYFCV). At 242 to 267 (RRNLQTSGEDWRKSLSVGKYKAPQDK) the chain is on the cytoplasmic side.

May form multisubunit complex with other heteroproteins. This association is required for efficient cell-surface expression. Does not associate with CD3 zeta. Expressed on natural killer cells and macrophages.

It is found in the cell membrane. Its function is as follows. Receptor for the Fc region of complexed immunoglobulins gamma. Low affinity receptor which binds to IgG1, IgG2a and IgG2b. Mediates neutrophil activation by IgG complexes redundantly with Fcgr4. This chain is Low affinity immunoglobulin gamma Fc region receptor III (Fcgr3), found in Rattus norvegicus (Rat).